Reading from the N-terminus, the 23-residue chain is GPSTDLVIGNKGFDGGIDSAILR.

The protein belongs to the multicopper oxidase family. Requires Cu cation as cofactor.

Its subcellular location is the secreted. It catalyses the reaction 4 hydroquinone + O2 = 4 benzosemiquinone + 2 H2O. Its activity is regulated as follows. Strongly inhibited by sodium azide, sodium cyanide, Li(+), Sn(+), Hg(2+), and the disulfide-reducing agents beta-mercaptoethanol, dithiothreitol and thioglycolic acid. Moderately inhibited by Mn(2+) and Fe(2+), inhibition by these metal ions is stronger at 0.1 mM than at 1 mM. Moderately inhibited by Cu(2+). In terms of biological role, lignin degradation and detoxification of lignin-derived products. Demethylates eucalyptus hard wood lignin. Has high activity against the non-phenolic heterocyclic compound ABTS, and lower activity against the phenolic substrates syringic acid, caffeic acid, syringaldazine, vanillic acid, catechol and levodihydroxyphenylalanine. This Galerina sp protein is Laccase-1.